Consider the following 328-residue polypeptide: MADLLNVLKDKLSGKNVKIVLPEGEDERVLTAATQLQATDYVTPIVLGDETKVQSLAQKLDLDISNIELINPATSELKAELVQSFVERRKGKATEEQAQELLNNVNYFGTMLVYAGKADGLVSGAAHSTGDTVRPALQIIKTKPGVSRTSGIFFMIKGDEQYIFGDCAINPELDSQGLAEIAVESAKSALSFGMDPKVAMLSFSTKGSAKSDDVTKVQEAVKLAQQKAEEEKLEAIIDGEFQFDAAIVPGVAEKKAPGAKLQGDANVFVFPSLEAGNIGYKIAQRLGGYDAVGPVLQGLNSPVNDLSRGCSIEDVYNLSIITAAQALQ.

Belongs to the phosphate acetyltransferase and butyryltransferase family.

Its subcellular location is the cytoplasm. The enzyme catalyses acetyl-CoA + phosphate = acetyl phosphate + CoA. It participates in metabolic intermediate biosynthesis; acetyl-CoA biosynthesis; acetyl-CoA from acetate: step 2/2. The chain is Phosphate acetyltransferase (pta) from Staphylococcus aureus (strain COL).